The primary structure comprises 222 residues: Thymidylate kinase (222 aa).

7–14 (GIDGAGKS) lines the ATP pocket.

Belongs to the thymidylate kinase family.

It carries out the reaction dTMP + ATP = dTDP + ADP. In terms of biological role, phosphorylation of dTMP to form dTDP in both de novo and salvage pathways of dTTP synthesis. This Chlorobium chlorochromatii (strain CaD3) protein is Thymidylate kinase.